Consider the following 1292-residue polypeptide: Zinc finger CCCH domain-containing protein 44 (1292 aa).

Residues 1-10 (MENQQKQLQQ) show a composition bias toward polar residues. 2 disordered regions span residues 1–24 (MENQ…REES) and 72–107 (IDEA…KKED). Residues 110-176 (EDVCFICFDG…SYMCYTCTFS (67 aa)) form a PHD-type zinc finger. Disordered regions lie at residues 256–313 (PWKE…LKKA) and 401–426 (KGAK…VHDP). The SWIB/MDM2 domain occupies 313–396 (APGDTSWATK…LKLLESHVLI (84 aa)). A compositionally biased stretch (polar residues) spans 404–414 (KTTNGETTHAV). The 134-residue stretch at 453 to 586 (AIDVHNINLI…TAATLQAMRI (134 aa)) folds into the Plus3 domain. Disordered regions lie at residues 624–731 (PEVH…TQGP), 777–832 (TTLP…SNDP), 876–915 (DVRE…INGS), and 1170–1245 (TTVE…HNNR). The segment covering 661 to 675 (QNKGVNLNNVGNNVQ) has biased composition (low complexity). The segment covering 689 to 698 (VHADKDDCSK) has biased composition (basic and acidic residues). The segment covering 699–708 (VHNNSSNIQE) has biased composition (polar residues). The 55-residue stretch at 716-770 (SEIWHYRDPTGKTQGPFSMVQLRRWKSSGHFPPYLRIWRAHENQDESVLLTDALA) folds into the GYF domain. A compositionally biased stretch (low complexity) spans 813–829 (VNTSATSSSSSTVTAHS). Composition is skewed to polar residues over residues 882–899 (GTDQ…NTTK) and 906–915 (NGGSVSINGS). 2 stretches are compositionally biased toward low complexity: residues 1188–1206 (SSEP…SARG) and 1231–1244 (NNGH…SHNN). A C3H1-type zinc finger spans residues 1267-1292 (PKGLKICKFYESGYCKRGASCSFWHP).

The polypeptide is Zinc finger CCCH domain-containing protein 44 (Arabidopsis thaliana (Mouse-ear cress)).